Reading from the N-terminus, the 79-residue chain is Ubiquinol-cytochrome c reductase complex assembly factor 5 (79 aa).

Topologically, residues 1–20 are mitochondrial matrix; that stretch reads MSPYSGSVRRLLDSWPGKKR. A helical transmembrane segment spans residues 21-43; sequence FGVYRFLPLFFLLGAGLEFSMIN. The Mitochondrial intermembrane segment spans residues 44–79; sequence WTVGETNFYRTFKRRQAKNYVEEQQHLQARAANNTN.

The protein belongs to the UQCC5 family. Interacts with respiratory complex III components Uqcc1 and RFeSP; the interactions are probably involved in the assembly and stability of the mitochondrial ubiquinol-cytochrome c reductase complex. Interacts with sloth2; the interaction stabilizes both components. In terms of tissue distribution, expressed in the brain.

The protein resides in the mitochondrion inner membrane. It is found in the mitochondrion. Required for the assembly and stability of the mitochondrial ubiquinol-cytochrome c reductase complex (complex III (CIII) or cytochrome b-c1 complex), a multisubunit transmembrane complex that is part of the mitochondrial electron transport chain (ETC) which drives oxidative phosphorylation. The chain is Ubiquinol-cytochrome c reductase complex assembly factor 5 from Drosophila melanogaster (Fruit fly).